We begin with the raw amino-acid sequence, 507 residues long: Iroquois-class homeodomain protein IRX-3 (507 aa).

Residues 19–39 (RPGAAGGGGGGSSAGGRSGPG) are disordered. The segment covering 22–39 (AAGGGGGGSSAGGRSGPG) has biased composition (gly residues). Residues 130-192 (DPSRPKNATR…NARRRLKKEN (63 aa)) constitute a DNA-binding region (homeobox; TALE-type). Disordered regions lie at residues 193-398 (KMTW…AAAA) and 416-468 (RPFP…SGTD). Composition is skewed to acidic residues over residues 213 to 223 (REEEDEEEDEE) and 230 to 261 (EMEE…DLEN). Pro residues-rich tracts occupy residues 314 to 342 (APPP…PAPA) and 418 to 428 (FPGPPAGPRPH). Phosphoserine is present on residues Ser326 and Ser329. Residues 436–460 (APQHLLGLPGAAGHPAAAAAAYARP) show a composition bias toward low complexity.

It belongs to the TALE/IRO homeobox family. In terms of tissue distribution, expressed by neural progenitor cells in discrete domains of the ventral neural tube. Also expressed in specific and overlapping patterns with Irx1 and Irx2 in the developing and adult metanephric kidney. In the adult metanephros, renal expression is confined to the S3 segment of the proximal tubule, in the loop of Henle.

It is found in the nucleus. Transcription factor involved in SHH-dependent neural patterning. Together with NKX2-2 and NKX6-1 acts to restrict the generation of motor neurons to the appropriate region of the neural tube. Belongs to the class I proteins of neuronal progenitor factors, which are repressed by SHH signals. Involved in the transcriptional repression of MNX1 in non-motor neuron cells. Acts as a regulator of energy metabolism. The polypeptide is Iroquois-class homeodomain protein IRX-3 (Irx3) (Mus musculus (Mouse)).